The chain runs to 886 residues: MAGNIVKWWKHKILGGYKQFTVLQECATDSEELIYPGRAPSACSAPPDLLLTSDREQMLKVKSSASTGSGTGQTKTSFQHSHHHHHHGHHHQSPSSNGHNHSGTSHQQQQQQQHHHHHKSQKDAFRKCTNGKAGGGNATAGGASGAGATNTINTTAATIRSDPDRVRLEEFTCDVSLEDGKKPQPLQFSFTLYDLDGHGKITKDDIAGIVSTIYESIGKSVVVPHYGSKTINVRLTVSPDGKTATTKPASAAVKKAIITPRRRYRSRKLISDDDGSDTSENCPRLLRNRTAATAVTNNGETANNNQAALQNQQQQQQQQHHHHHHHHSNGSSGKLKESNLSKATALAGDNQVNRSIGLSNSSEGSSAVGQLLVEAYHKNNLSPGAANAGAGKGVLNNAPNATKSKANENVYESINNLKCCNLQQQQQQHTASNNTSLQTTASSLPVTATGLNQSTTSTAALICHDCVDGGAPTTTLLPPLSTLETVVIPAPSAGVTGRAKRKLVRKTRASRKTAIAAKMMSEDFARRPRARSLSVGNENCYENVIGRMAAAQEECWKSSLCRRELIEIIRESMVKNSLCFQPNRRKEHHRLAAAVGATRSTQPTPVKLSTALLNQQYPNLSAEQKLTRSINQVEQWLDHRSPKLVPKVKLADDMQLQRTVVSRPLKRSKSKEELTPSNLLLLENLKISEDIAEIAVVTPKKVYNKESLIASATKKNIKTHHQHQHSPSRQPTAVPTVAIGAEKPSAPLTVVNKQSIPVGDAQLVQLQYGSVPINADPSECENLIRMSDDGEDVEQHQHQQHQQQQQTAPMAATKHSYRHHQPQSRSQPQSPQHHQHHHQQEPRYCGSGRAHSVSSASAASTTAVHRYVHEHIHHHYHHFENDPDES.

Low complexity predominate over residues 62–79 (KSSASTGSGTGQTKTSFQ). Residues 62 to 149 (KSSASTGSGT…AGGASGAGAT (88 aa)) are disordered. The span at 80 to 92 (HSHHHHHHGHHHQ) shows a compositional bias: basic residues. The segment covering 93–112 (SPSSNGHNHSGTSHQQQQQQ) has biased composition (low complexity). The span at 132–145 (KAGGGNATAGGASG) shows a compositional bias: gly residues. The 36-residue stretch at 181–216 (KKPQPLQFSFTLYDLDGHGKITKDDIAGIVSTIYES) folds into the EF-hand domain. 2 disordered regions span residues 267–286 (RKLI…PRLL) and 307–338 (AALQ…LKES). The segment covering 319 to 328 (QHHHHHHHHS) has biased composition (basic residues). A required for nuclear localization and inhibition of Wnt signaling region spans residues 554-583 (ECWKSSLCRRELIEIIRESMVKNSLCFQPN). The disordered stretch occupies residues 789-861 (DGEDVEQHQH…SVSSASAAST (73 aa)). 2 stretches are compositionally biased toward low complexity: residues 823-832 (QSRSQPQSPQ) and 846-861 (GSGR…AAST).

This sequence belongs to the NKD family.

The protein localises to the cell membrane. It localises to the cytoplasm. The protein resides in the nucleus. Functionally, cell autonomous antagonist of the canonical Wnt signaling pathway. May activate a second Wnt signaling pathway that controls planar cell polarity. Required for neuroblast specification. This chain is Protein naked cuticle homolog (nkd), found in Anopheles gambiae (African malaria mosquito).